The sequence spans 678 residues: NADPH--cytochrome P450 reductase (678 aa).

An N-acetylglycine modification is found at glycine 2. Over 2–21 the chain is Lumenal; it reads GDSHVDTGATSTEAVAEEVS. Residues 22 to 42 traverse the membrane as a helical segment; it reads LFSMTDMILLSVLVGFLTYFF. Over 43 to 678 the chain is Cytoplasmic; the sequence is LFRKKKEEIP…KGRYSLDVWS (636 aa). Phosphoserine is present on serine 63. The 145-residue stretch at 80–224 folds into the Flavodoxin-like domain; the sequence is IIVFYGSQTG…DFITWREQFW (145 aa). FMN contacts are provided by residues 86–91, 138–141, 173–182, and aspartate 208; these read SQTGTA, ATYG, and LGNKTYEHFN. One can recognise an FAD-binding FR-type domain in the interval 279–521; it reads KNPFLAAVTT…FVRKSQFRLP (243 aa). Residue arginine 298 participates in NADP(+) binding. Residues arginine 424, 454–457, 472–474, tyrosine 478, and 488–491 each bind FAD; these read RYYS, CAV, and GVAT. NADP(+)-binding positions include threonine 535, 596 to 597, 602 to 606, and aspartate 639; these read SR and KVYVQ. Tryptophan 677 contributes to the FAD binding site.

The protein belongs to the NADPH--cytochrome P450 reductase family. In the N-terminal section; belongs to the flavodoxin family. This sequence in the C-terminal section; belongs to the flavoprotein pyridine nucleotide cytochrome reductase family. The cofactor is FAD. Requires FMN as cofactor.

The protein localises to the endoplasmic reticulum membrane. It catalyses the reaction 2 oxidized [cytochrome P450] + NADPH = 2 reduced [cytochrome P450] + NADP(+) + H(+). Functionally, this enzyme is required for electron transfer from NADP to cytochrome P450 in microsomes. It can also provide electron transfer to heme oxygenase and cytochrome B5. This chain is NADPH--cytochrome P450 reductase, found in Cavia porcellus (Guinea pig).